The sequence spans 367 residues: F-box protein At3g56470 (367 aa).

Basic residues predominate over residues 1 to 18; it reads MVTRRRSKKKKKTKRKKQ. The segment at 1 to 24 is disordered; that stretch reads MVTRRRSKKKKKTKRKKQSSKEKE. The region spanning 26–81 is the F-box domain; sequence YQTFINLPCDLLQLVISRLPLKDNIRASAVCKTWHEACVSLRVIHTSPWLIYFSKT.

This Arabidopsis thaliana (Mouse-ear cress) protein is F-box protein At3g56470.